Here is a 435-residue protein sequence, read N- to C-terminus: NADH-quinone oxidoreductase subunit D (435 aa).

It belongs to the complex I 49 kDa subunit family. In terms of assembly, NDH-1 is composed of 14 different subunits. Subunits NuoB, C, D, E, F, and G constitute the peripheral sector of the complex.

The protein localises to the cell inner membrane. The enzyme catalyses a quinone + NADH + 5 H(+)(in) = a quinol + NAD(+) + 4 H(+)(out). Functionally, NDH-1 shuttles electrons from NADH, via FMN and iron-sulfur (Fe-S) centers, to quinones in the respiratory chain. The immediate electron acceptor for the enzyme in this species is believed to be ubiquinone. Couples the redox reaction to proton translocation (for every two electrons transferred, four hydrogen ions are translocated across the cytoplasmic membrane), and thus conserves the redox energy in a proton gradient. This Xylella fastidiosa (strain 9a5c) protein is NADH-quinone oxidoreductase subunit D.